The sequence spans 234 residues: Small ribosomal subunit protein uS3 (234 aa).

The KH type-2 domain maps to 39–109 (IRTLINKHYG…EVRIAIYEVK (71 aa)).

It belongs to the universal ribosomal protein uS3 family. In terms of assembly, part of the 30S ribosomal subunit. Forms a tight complex with proteins S10 and S14.

In terms of biological role, binds the lower part of the 30S subunit head. Binds mRNA in the 70S ribosome, positioning it for translation. This Coprothermobacter proteolyticus (strain ATCC 35245 / DSM 5265 / OCM 4 / BT) protein is Small ribosomal subunit protein uS3.